The chain runs to 405 residues: Phosphoglycerate kinase (405 aa).

Residues 23 to 25 (DFN), Arg-39, 62 to 65 (HLGR), Arg-121, and Arg-154 contribute to the substrate site. ATP-binding positions include Lys-207, Gly-298, Glu-329, and 355–358 (GGDT).

It belongs to the phosphoglycerate kinase family. In terms of assembly, monomer.

The protein resides in the cytoplasm. It carries out the reaction (2R)-3-phosphoglycerate + ATP = (2R)-3-phospho-glyceroyl phosphate + ADP. The protein operates within carbohydrate degradation; glycolysis; pyruvate from D-glyceraldehyde 3-phosphate: step 2/5. This is Phosphoglycerate kinase from Campylobacter hominis (strain ATCC BAA-381 / DSM 21671 / CCUG 45161 / LMG 19568 / NCTC 13146 / CH001A).